The sequence spans 461 residues: CASP-like protein 4U1 (461 aa).

The disordered stretch occupies residues 1–239; it reads MASTPRTPAP…RAAETKLPLS (239 aa). Residues 1–314 lie on the Cytoplasmic side of the membrane; the sequence is MASTPRTPAP…AAVAVGERRE (314 aa). Residues 7–69 show a composition bias toward pro residues; the sequence is TPAPVRSPPP…PLETPPPPSP (63 aa). 2 stretches are compositionally biased toward low complexity: residues 116-126 and 135-155; these read LSPMRLAAPRL and TPTG…AAAG. Residues 193–204 show a composition bias toward pro residues; it reads SPSPSPTPPSPL. Positions 205–221 are enriched in low complexity; sequence TPAAAPVVNNNSNNKNN. The helical transmembrane segment at 315 to 335 threads the bilayer; that stretch reads LSVTLRLATAVLSLAAFSVIA. Residues 336–354 are Extracellular-facing; the sequence is SARTSGWAGDYYAHHLQYR. The helical transmembrane segment at 355 to 375 threads the bilayer; it reads YAVAVNVIVCAYSIAQSFGEI. Over 376–392 the chain is Cytoplasmic; it reads RRLISPRFIFRSMSSYY. The chain crosses the membrane as a helical span at residues 393–413; it reads CSLFLDQALAYLLMSASSAAA. The Extracellular segment spans residues 414-431; sequence SRNDLWVSRFGTDAFNRK. A helical membrane pass occupies residues 432–452; that stretch reads ITSALWLSFIAFLMLALNALI. The Cytoplasmic segment spans residues 453–461; that stretch reads STANLFSML.

It belongs to the Casparian strip membrane proteins (CASP) family. In terms of assembly, homodimer and heterodimers.

The protein resides in the cell membrane. The protein is CASP-like protein 4U1 of Sorghum bicolor (Sorghum).